Reading from the N-terminus, the 1038-residue chain is Pentatricopeptide repeat-containing protein At5g27270 (1038 aa).

A compositionally biased stretch (low complexity) spans 23-38 (SRNSRISIKSSSSSSK). Residues 23–69 (SRNSRISIKSSSSSSKVRPDPWSLSDGNPEKPKPRYERPKHPLSDDD) are disordered. Residues 50–69 (NPEKPKPRYERPKHPLSDDD) show a composition bias toward basic and acidic residues. 23 PPR repeats span residues 187 to 221 (SVVVYTIVLRLYGQVGKIKMAEETFLEMLEVGCEP), 222 to 256 (DAVACGTMLCTYARWGRHSAMLTFYKAVQERRILL), 257 to 291 (STSVYNFMLSSLQKKSFHGKVIDLWLEMVEEGVPP), 292 to 326 (NEFTYTLVVSSYAKQGFKEEALKAFGEMKSLGFVP), 327 to 361 (EEVTYSSVISLSVKAGDWEKAIGLYEDMRSQGIVP), 362 to 396 (SNYTCATMLSLYYKTENYPKALSLFADMERNKIPA), 397 to 431 (DEVIRGLIIRIYGKLGLFHDAQSMFEETERLNLLA), 432 to 466 (DEKTYLAMSQVHLNSGNVVKALDVIEMMKTRDIPL), 467 to 501 (SRFAYIVMLQCYAKIQNVDCAEEAFRALSKTGLPD), 502 to 535 (ASSCNDMLNLYTRLNLGEKAKGFIKQIMVDQVHF), 536 to 570 (DIELYKTAMRVYCKEGMVAEAQDLIVKMGREARVK), 601 to 631 (DVMALGLMLNLRLKEGNLNETKAILNLMFKT), 634 to 668 (GSSAVNRVISSFVREGDVSKAEMIADIIIRLGLRM), 669 to 699 (EEETIATLIAVYGRQHKLKEAKRLYLAAGES), 703 to 737 (GKSVIRSMIDAYVRCGWLEDAYGLFMESAEKGCDP), 738 to 772 (GAVTISILVNALTNRGKHREAEHISRTCLEKNIEL), 773 to 807 (DTVGYNTLIKAMLEAGKLQCASEIYERMHTSGVPC), 808 to 842 (SIQTYNTMISVYGRGLQLDKAIEIFSNARRSGLYL), 843 to 877 (DEKIYTNMIMHYGKGGKMSEALSLFSEMQKKGIKP), 878 to 912 (GTPSYNMMVKICATSRLHHEVDELLQAMERNGRCT), 913 to 947 (DLSTYLTLIQVYAESSQFAEAEKTITLVKEKGIPL), 948 to 982 (SHSHFSSLLSALVKAGMMEEAERTYCKMSEAGISP), and 983 to 1017 (DSACKRTILKGYMTCGDAEKGILFYEKMIRSSVED).

Belongs to the PPR family. P subfamily.

This chain is Pentatricopeptide repeat-containing protein At5g27270 (EMB976), found in Arabidopsis thaliana (Mouse-ear cress).